A 1669-amino-acid chain; its full sequence is Formin-like protein 12 (1669 aa).

The 189-residue stretch at 5–193 (RRLFYRKPPD…QYICKMDDEL (189 aa)) folds into the Phosphatase tensin-type domain. The active-site Phosphocysteine intermediate is Cys126. The C2 tensin-type domain maps to 199 to 338 (PIPFTLDCVI…FKAEVLFSEF (140 aa)). Disordered regions lie at residues 688–709 (QGSSFQANGDPTCANTSTDANE), 1025–1240 (DAGP…GHGL), and 1631–1669 (IEADKKKAQKEAEKEANQDRTPVKSKDGLVDRSPRSPFK). The span at 1036-1050 (LEWKRCPHHPPERPH) shows a compositional bias: basic and acidic residues. Pro residues-rich tracts occupy residues 1060–1069 (PSPPSPPPPQ), 1098–1127 (APPPPSIGAGAPPPPPPPGGITGVPPPPPI), 1136–1190 (PPAP…PPPR), and 1198–1230 (PPTPPGAPAPPMPPGVPGGPPPPPGGRGLPAPP). Residues 1247-1646 (NSAATARRST…KAQKEAEKEA (400 aa)) enclose the FH2 domain.

The protein belongs to the formin-like family. Class-II subfamily.

This chain is Formin-like protein 12 (FH12), found in Oryza sativa subsp. japonica (Rice).